The following is a 278-amino-acid chain: Protein EXORDIUM-like 4 (278 aa).

The N-terminal stretch at 1-23 (MAYNYRFAILLVLLSATVGFTAA) is a signal peptide. An N-linked (GlcNAc...) asparagine glycan is attached at asparagine 35.

It belongs to the EXORDIUM family.

It is found in the secreted. The protein resides in the extracellular space. Its subcellular location is the apoplast. May play a role in a brassinosteroid-dependent regulation of growth and development. The sequence is that of Protein EXORDIUM-like 4 (EXL4) from Arabidopsis thaliana (Mouse-ear cress).